Here is a 266-residue protein sequence, read N- to C-terminus: Glucose 1-dehydrogenase (266 aa).

15-39 (LVTGASQGIGEATALRFAEEGAQVA) is an NADP(+) binding site. S149 contributes to the substrate binding site. The active-site Proton acceptor is Y162.

Belongs to the short-chain dehydrogenases/reductases (SDR) family. Homotetramer or homooctamer.

It carries out the reaction D-glucose + NADP(+) = D-glucono-1,5-lactone + NADPH + H(+). In terms of biological role, oxidizes both D-glucose and D-mannose, but is 15 times more catalytically efficient with mannose. Strictly dependent on NADP. The polypeptide is Glucose 1-dehydrogenase (Gluconobacter oxydans (strain 621H) (Gluconobacter suboxydans)).